We begin with the raw amino-acid sequence, 78 residues long: Putative membrane protein insertion efficiency factor (78 aa).

This sequence belongs to the UPF0161 family.

Its subcellular location is the cell inner membrane. Functionally, could be involved in insertion of integral membrane proteins into the membrane. This chain is Putative membrane protein insertion efficiency factor, found in Prochlorococcus marinus (strain MIT 9312).